A 724-amino-acid chain; its full sequence is Catalase-peroxidase (724 aa).

Residues 96–225 (WHAAGTYRVA…LAAVMMGLIY (130 aa)) constitute a cross-link (tryptophyl-tyrosyl-methioninium (Trp-Tyr) (with M-251)). Catalysis depends on H97, which acts as the Proton acceptor. A cross-link (tryptophyl-tyrosyl-methioninium (Tyr-Met) (with W-96)) is located at residues 225 to 251 (YVNPEGVDGNPDPLRTAEDVRITFERM). Residue H266 participates in heme b binding.

This sequence belongs to the peroxidase family. Peroxidase/catalase subfamily. Homodimer or homotetramer. Heme b is required as a cofactor. Post-translationally, formation of the three residue Trp-Tyr-Met cross-link is important for the catalase, but not the peroxidase activity of the enzyme.

The enzyme catalyses H2O2 + AH2 = A + 2 H2O. It carries out the reaction 2 H2O2 = O2 + 2 H2O. Functionally, bifunctional enzyme with both catalase and broad-spectrum peroxidase activity. The protein is Catalase-peroxidase of Halorhodospira halophila (strain DSM 244 / SL1) (Ectothiorhodospira halophila (strain DSM 244 / SL1)).